Reading from the N-terminus, the 570-residue chain is nebramycin 5' synthase (570 aa).

Residues 1-354 (MRVLGLNGWP…AAAAVAVELG (354 aa)) are kae1-like. Residue aspartate 12 participates in tobramycin binding. Histidine 14 (proton acceptor) is an active-site residue. Lysine 39 contributes to the ATP binding site. The Fe cation site is built by histidine 114, histidine 118, and aspartate 137. Carbamoyl adenylate is bound by residues glutamine 139, glycine 168, and glutamate 172. Tobramycin contacts are provided by glutamate 172 and aspartate 228. 2 residues coordinate carbamoyl adenylate: glycine 310 and asparagine 314. Aspartate 338 is a Fe cation binding site. Residues 367–570 (GPEFSPDQVR…PYLVTKDLRH (204 aa)) form a yrdC-like region. Positions 418 and 449 each coordinate ATP. 418 to 419 (RA) contributes to the carbamoyl phosphate binding site. Residues arginine 498 and 528-530 (NTS) each bind carbamoyl phosphate.

This sequence belongs to the NodU/CmcH family. Requires Fe(2+) as cofactor.

It catalyses the reaction tobramycin + carbamoyl phosphate + ATP + H2O = nebramycin 5' + AMP + phosphate + diphosphate + H(+). The enzyme catalyses kanamycin A + carbamoyl phosphate + ATP + H2O = 6''-O-carbamoylkanamycin A + AMP + phosphate + diphosphate + H(+). The catalysed reaction is carbamoyl phosphate + ATP + H2O = carbamoyl adenylate + phosphate + diphosphate. It carries out the reaction tobramycin + carbamoyl adenylate = nebramycin 5' + AMP + H(+). It catalyses the reaction carbamoyl adenylate + kanamycin A = 6''-O-carbamoylkanamycin A + AMP + H(+). Its pathway is antibiotic biosynthesis; kanamycin biosynthesis. The protein operates within antibiotic biosynthesis; tobramycin biosynthesis. ADP inhibits the formation of nebramycin 5'. Its function is as follows. TobZ is involved in the biosynthesis of the 2-deoxystreptamine-containing aminoglycoside antibiotics such as nebramycin 5 and 6-O-carbamoylkanamycin. Catalyzes the hydrolysis of carbamoyl phosphate and its subsequent adenylation by ATP to yield O-carbamoyladenylate. Then it catalyzes the transfer of the carbamoyl moiety from O-carbamoyladenylate to the tobramycin 6-hydroxy group to yield nebramycin 5'. It catalyzes the same reaction with kanamycin A. These reactions are considerably slower in the presence of deoxy-ATP. The sequence is that of nebramycin 5' synthase (tobZ) from Streptoalloteichus tenebrarius (strain ATCC 17920 / DSM 40477 / JCM 4838 / CBS 697.72 / NBRC 16177 / NCIMB 11028 / NRRL B-12390 / A12253. 1 / ISP 5477) (Streptomyces tenebrarius).